The following is a 528-amino-acid chain: G protein-coupled receptor 161 (528 aa).

Residues 1 to 30 (MSLNSSLGHRKELSNLTEGASDQGGSGVTE) lie on the Extracellular side of the membrane. N-linked (GlcNAc...) asparagine glycosylation is found at asparagine 4 and asparagine 15. Residues 31 to 51 (FVAIVIITVFVCLGNLVIVIT) traverse the membrane as a helical segment. Residues 52-64 (LYRKSYLLTLSNK) lie on the Cytoplasmic side of the membrane. Residues 65–85 (FVFSLTLSNFLLSVLVLPFVV) form a helical membrane-spanning segment. The Extracellular segment spans residues 86 to 101 (TSSIRREWIFGVVWCN). Cysteine 100 and cysteine 178 are disulfide-bonded. The N-linked (GlcNAc...) asparagine glycan is linked to asparagine 101. Residues 102 to 122 (FSALLYLLISSASMLTLGIIA) form a helical membrane-spanning segment. The Cytoplasmic segment spans residues 123 to 143 (VDRYYAVLYPMAYPMKITGNR). The chain crosses the membrane as a helical span at residues 144 to 164 (AVMVLAYIWLHSLIGCLPPLF). The Extracellular portion of the chain corresponds to 165–190 (GWSSVEFDEFKWMCVAAWHREPGYTA). Residues 191-211 (FWQIWCALLPFLVMLVCYGFI) traverse the membrane as a helical segment. The Cytoplasmic segment spans residues 212 to 269 (FRVARVKARKVHCGAVVTVEVGVQRTGRKNSSTSTSSSGSRKSAFQGVVYSANQCKAL). Residues 270–290 (VTILVVIGAFMVTWGPYMVVI) form a helical membrane-spanning segment. The Extracellular portion of the chain corresponds to 291-306 (TSEALWGKNCVSPTLE). A helical transmembrane segment spans residues 307–327 (TWATWLSFTSAICHPLIYGLW). Residues 328-528 (NKTVRKELLG…EGDVLATEQR (201 aa)) lie on the Cytoplasmic side of the membrane.

Belongs to the G-protein coupled receptor 1 family.

The protein localises to the cell projection. Its subcellular location is the cilium membrane. It localises to the cell membrane. In terms of biological role, key negative regulator of Shh signaling, which promotes the processing of GLI3 into GLI3R during neural tube development. Recruited by TULP3 and the IFT-A complex to primary cilia and acts as a regulator of the PKA-dependent basal repression machinery in Shh signaling by increasing cAMP levels, leading to promote the PKA-dependent processing of GLI3 into GLI3R and repress the Shh signaling. In presence of SHH, it is removed from primary cilia and is internalized into recycling endosomes, preventing its activity and allowing activation of the Shh signaling. Its ligand is unknown. The polypeptide is G protein-coupled receptor 161 (GPR161) (Bos taurus (Bovine)).